The sequence spans 56 residues: Large ribosomal subunit protein eL24 (56 aa).

Zn(2+) contacts are provided by Cys6, Cys9, Cys32, and Cys36. A C4-type zinc finger spans residues 6 to 36; the sequence is CSFCNTRITPGTGKLYAKKDGTVYYFCSSKC.

It belongs to the eukaryotic ribosomal protein eL24 family. As to quaternary structure, part of the 50S ribosomal subunit. Forms a cluster with proteins L3 and L14. The cofactor is Zn(2+).

Functionally, binds to the 23S rRNA. The chain is Large ribosomal subunit protein eL24 from Methanothrix thermoacetophila (strain DSM 6194 / JCM 14653 / NBRC 101360 / PT) (Methanosaeta thermophila).